Reading from the N-terminus, the 359-residue chain is GTPase Obg (359 aa).

Positions 1 to 159 constitute an Obg domain; sequence MQFIDQAEIQ…RSLRLELKLL (159 aa). The 169-residue stretch at 160 to 328 folds into the OBG-type G domain; it reads AEVGIIGLPN…LLHQIWQELE (169 aa). GTP contacts are provided by residues 166-173, 191-195, 213-216, 280-283, and 309-311; these read GLPNAGKS, FTTLV, DIPG, NKID, and SAI. Mg(2+)-binding residues include serine 173 and threonine 193.

It belongs to the TRAFAC class OBG-HflX-like GTPase superfamily. OBG GTPase family. In terms of assembly, monomer. Mg(2+) serves as cofactor.

It localises to the cytoplasm. An essential GTPase which binds GTP, GDP and possibly (p)ppGpp with moderate affinity, with high nucleotide exchange rates and a fairly low GTP hydrolysis rate. Plays a role in control of the cell cycle, stress response, ribosome biogenesis and in those bacteria that undergo differentiation, in morphogenesis control. This is GTPase Obg from Cyanothece sp. (strain PCC 7425 / ATCC 29141).